A 238-amino-acid chain; its full sequence is Large ribosomal subunit protein uL1 (238 aa).

The protein belongs to the universal ribosomal protein uL1 family. Part of the 50S ribosomal subunit.

Binds directly to 23S rRNA. The L1 stalk is quite mobile in the ribosome, and is involved in E site tRNA release. Functionally, protein L1 is also a translational repressor protein, it controls the translation of the L11 operon by binding to its mRNA. The chain is Large ribosomal subunit protein uL1 from Picosynechococcus sp. (strain ATCC 27264 / PCC 7002 / PR-6) (Agmenellum quadruplicatum).